The primary structure comprises 364 residues: CLIP domain-containing serine protease B15 (364 aa).

The N-terminal stretch at 1 to 19 is a signal peptide; it reads MRWLVCLIVSWCSLVPLGA. A Clip domain is found at 30-89; the sequence is PCQTPSGTAGTCEPVKNCSYVRKILKSPDFSHYDTTYLDTLKCGDLMVPMRKKPIPLLCC. 3 disulfides stabilise this stretch: cysteine 31/cysteine 88, cysteine 41/cysteine 72, and cysteine 47/cysteine 89. Asparagine 46 carries an N-linked (GlcNAc...) asparagine glycan. Positions 107 to 359 constitute a Peptidase S1 domain; the sequence is IYFGEETERG…YLDWMETVMF (253 aa). N-linked (GlcNAc...) asparagine glycosylation occurs at asparagine 131. An intrachain disulfide couples cysteine 137 to cysteine 153. Histidine 152 acts as the Charge relay system in catalysis. Asparagine 171, asparagine 177, and asparagine 206 each carry an N-linked (GlcNAc...) asparagine glycan. Residue aspartate 212 is the Charge relay system of the active site. Cysteine 279 and cysteine 296 are oxidised to a cystine. N-linked (GlcNAc...) asparagine glycans are attached at residues asparagine 287 and asparagine 301. A disulfide bridge links cysteine 306 with cysteine 335. Serine 310 serves as the catalytic Charge relay system.

The protein belongs to the peptidase S1 family. CLIP subfamily. N-glycosylated. Post-translationally, proteolytically cleaved. As to expression, expressed by a subpopulation of hemocytes.

The protein localises to the secreted. In terms of biological role, serine protease. Plays a role in innate immunity against infections by parasite P.berghei and by Gram-negative bacteria such as E.coli. In response to P.berghei infection, contributes to the clearing of parasite ookinetes independent of melanization, an innate immune response which consists in the deposition of melanin pigments on invading pathogens and parasites. The polypeptide is CLIP domain-containing serine protease B15 (Anopheles gambiae (African malaria mosquito)).